Here is a 397-residue protein sequence, read N- to C-terminus: Lysophospholipid transporter LplT (397 aa).

At 1 to 17 (MSESVHTNTSLWSKGMK) the chain is on the periplasmic side. A helical transmembrane segment spans residues 18-38 (AVIVAQFLSAFGDNALLFATL). Residues 39–52 (ALLKAQFYPEWSQP) lie on the Cytoplasmic side of the membrane. The helical transmembrane segment at 53 to 73 (ILQMVFVGAYILFAPFVGQVA) threads the bilayer. Topologically, residues 74–90 (DSFAKGRVMMFANGLKL) are periplasmic. The helical transmembrane segment at 91 to 111 (LGAASICFGINPFLGYTLVGV) threads the bilayer. Residues 112–144 (GAAAYSPAKYGILGELTTGSKLVKANGLMEAST) lie on the Cytoplasmic side of the membrane. Residues 145-165 (IAAILLGSVAGGVLADWHVLV) traverse the membrane as a helical segment. Residue A166 is a topological domain, periplasmic. Residues 167-187 (LAACALAYGGAVVANIYIPKL) traverse the membrane as a helical segment. Topologically, residues 188–226 (AAARPGQSWNLINMTRSFLNACTSLWRNGETRFSLVGTS) are cytoplasmic. A helical membrane pass occupies residues 227–247 (LFWGAGVTLRFLLVLWVPVAL). Residues 248–256 (GITDNATPT) are Periplasmic-facing. A helical transmembrane segment spans residues 257-277 (YLNAMVAIGIVVGAGAAAKLV). Residues 278–280 (TLE) are Cytoplasmic-facing. A helical transmembrane segment spans residues 281–301 (TVSRCMPAGILIGVVVLIFSL). Residues 302–304 (QHE) are Periplasmic-facing. The helical transmembrane segment at 305-325 (LLPAYALLMLIGVLGGFFVVP) threads the bilayer. Topologically, residues 326 to 343 (LNALLQERGKKSVGAGNA) are cytoplasmic. The chain crosses the membrane as a helical span at residues 344 to 364 (IAVQNLGENSAMLLMLGIYSL). At 365-366 (AV) the chain is on the periplasmic side. Residues 367 to 387 (MVGIPVVPIGIGFGALFALAI) form a helical membrane-spanning segment. Residues 388 to 397 (TALWIWQRRH) are Cytoplasmic-facing.

The protein belongs to the major facilitator superfamily. LplT (TC 2.A.1.42) family.

The protein localises to the cell inner membrane. Its function is as follows. Catalyzes the facilitated diffusion of 2-acyl-glycero-3-phosphoethanolamine (2-acyl-GPE) into the cell. In Escherichia coli (strain SMS-3-5 / SECEC), this protein is Lysophospholipid transporter LplT.